Consider the following 120-residue polypeptide: NAD(P)H-quinone oxidoreductase subunit 3 (120 aa).

3 helical membrane passes run glycine 6–valine 26, methionine 64–valine 84, and leucine 89–alanine 109.

Belongs to the complex I subunit 3 family. As to quaternary structure, NDH-1 can be composed of about 15 different subunits; different subcomplexes with different compositions have been identified which probably have different functions.

It is found in the cellular thylakoid membrane. The catalysed reaction is a plastoquinone + NADH + (n+1) H(+)(in) = a plastoquinol + NAD(+) + n H(+)(out). The enzyme catalyses a plastoquinone + NADPH + (n+1) H(+)(in) = a plastoquinol + NADP(+) + n H(+)(out). In terms of biological role, NDH-1 shuttles electrons from an unknown electron donor, via FMN and iron-sulfur (Fe-S) centers, to quinones in the respiratory and/or the photosynthetic chain. The immediate electron acceptor for the enzyme in this species is believed to be plastoquinone. Couples the redox reaction to proton translocation, and thus conserves the redox energy in a proton gradient. Cyanobacterial NDH-1 also plays a role in inorganic carbon-concentration. This is NAD(P)H-quinone oxidoreductase subunit 3 from Prochlorococcus marinus (strain MIT 9211).